The following is a 131-amino-acid chain: UPF0102 protein YraN (131 aa).

The interval 1–20 (MATVPTRSGSPRQLTTKQTG) is disordered.

The protein belongs to the UPF0102 family.

The protein is UPF0102 protein YraN of Escherichia coli O139:H28 (strain E24377A / ETEC).